An 81-amino-acid chain; its full sequence is Photosystem I iron-sulfur center (81 aa).

4Fe-4S ferredoxin-type domains are found at residues 2 to 31 (SHTV…MAPW) and 39 to 68 (VASA…VRVY). [4Fe-4S] cluster contacts are provided by C11, C14, C17, C21, C48, C51, C54, and C58.

In terms of assembly, the eukaryotic PSI reaction center is composed of at least 11 subunits. [4Fe-4S] cluster is required as a cofactor.

It is found in the plastid. The protein localises to the chloroplast thylakoid membrane. The catalysed reaction is reduced [plastocyanin] + hnu + oxidized [2Fe-2S]-[ferredoxin] = oxidized [plastocyanin] + reduced [2Fe-2S]-[ferredoxin]. Functionally, apoprotein for the two 4Fe-4S centers FA and FB of photosystem I (PSI); essential for photochemical activity. FB is the terminal electron acceptor of PSI, donating electrons to ferredoxin. The C-terminus interacts with PsaA/B/D and helps assemble the protein into the PSI complex. Required for binding of PsaD and PsaE to PSI. PSI is a plastocyanin/cytochrome c6-ferredoxin oxidoreductase, converting photonic excitation into a charge separation, which transfers an electron from the donor P700 chlorophyll pair to the spectroscopically characterized acceptors A0, A1, FX, FA and FB in turn. The protein is Photosystem I iron-sulfur center of Tupiella akineta (Green alga).